A 984-amino-acid polypeptide reads, in one-letter code: MAAAFAYRWLLCAAGIVNVLPIGAQRHTASDNPSTYNIGGVLSNSESELHFHTTIAHLNFDQQYVPRKVTYYDKTIRMDKNPIKTVFNVCDKLIEKRVYAVVVSHEQTSGDLSPAAVSYTSGFYSIPVIGISSRDAAFSDKNIHVSFLRTVPPYYHQADVWLELLSHFLYTKVIIIHSSDTDGRAILGRFQTTSQTYYDDVDVRATVELIVEFEPKLESFTEHLIDMKTAQSRVYLMYASTEDAQVIFRDAGEYNMTGEGHVWIVTEQALHANNTPDGVLGLQLEHAHSDKGHIRDSVYVLASAIKEMISNETIAEAPKDCGDSAVNWESGKRLFQYLKSRNITGETGQVAFDDNGDRIYAGYDVINIREHQKQHLVGKFSYDSLRAKMRMRINDSEIIWGGKQKRKPEGIMIPTHLKVLTIEEKPFVYVRRMGDDEFRCEPDERPCPLFNASDATTNEFCCRGYCIDLLIELSKRINFTYDLALSPDGQFGHYILRNNTGAMTLRKEWTGLIGELVNERADMIVAPLTINPERAEYIEFSKPFKYQGITILEKKPSRSSTLVSFLQPFSNTLWILVMVSVHVVALVLYLLDRFSPFGRFKLSHSDSNEEKALNLSSAVWFAWGVLLNSGIGEGTPRSFSARVLGMVWAGFAMIIVASYTANLAAFLVLERPKTKLSGINDARLRNTMENLTCATVKGSSVDMYFRRQVELSNMYRTMESNNYVTAEQAIQDVKKGKLMAFIWDSSRLEYEASKDCELVTAGELFGRSGYGVGLQKGSPWTDAVTLTILEFHESGFMEKLDKQWIFHGHVQQNCELFEKTPNTLGLKNMAGVFILVGVGIAGGVGLIIIEVIYKKHQVKKQKRLDIARHAADKWRGTIEKRKTIRASLAMQRQYNVGLMARQPPGTISLAVDKRRYPRLGQRLGPERAWPGDAADVLRTRRPYDLTKSGLVPPALGLGKTRPQQNPLPPRYSPGYTSDVSHLVV.

An N-terminal signal peptide occupies residues 1 to 24 (MAAAFAYRWLLCAAGIVNVLPIGA). Over 25 to 570 (QRHTASDNPS…TLVSFLQPFS (546 aa)) the chain is Extracellular. Asn255, Asn311, Asn342, Asn394, Asn451, Asn478, and Asn498 each carry an N-linked (GlcNAc...) asparagine glycan. Glycine-binding positions include 527–529 (PLT) and Arg534. The helical transmembrane segment at 571–591 (NTLWILVMVSVHVVALVLYLL) threads the bilayer. Residues 592-648 (DRFSPFGRFKLSHSDSNEEKALNLSSAVWFAWGVLLNSGIGEGTPRSFSARVLGMVW) lie on the Cytoplasmic side of the membrane. The chain crosses the membrane as a helical span at residues 649–669 (AGFAMIIVASYTANLAAFLVL). Over 670–828 (ERPKTKLSGI…KTPNTLGLKN (159 aa)) the chain is Extracellular. N-linked (GlcNAc...) asparagine glycosylation is present at Asn690. Glycine-binding residues include Ser700 and Asp744. A helical transmembrane segment spans residues 829 to 849 (MAGVFILVGVGIAGGVGLIII). At 850–984 (EVIYKKHQVK…YTSDVSHLVV (135 aa)) the chain is on the cytoplasmic side. Residues 947–984 (KSGLVPPALGLGKTRPQQNPLPPRYSPGYTSDVSHLVV) are disordered. The segment covering 974 to 984 (GYTSDVSHLVV) has biased composition (polar residues).

It belongs to the glutamate-gated ion channel (TC 1.A.10.1) family. As to quaternary structure, forms a heteromeric NMDA channel with Nmdar2.

The protein localises to the cell membrane. It is found in the postsynaptic cell membrane. The protein resides in the postsynaptic density. NMDA receptor subtype of glutamate-gated ion channels with high calcium permeability and voltage-dependent sensitivity to magnesium. Mediated by glycine. This protein plays a key role in synaptic plasticity, synaptogenesis, excitotoxicity, memory acquisition and learning. It mediates neuronal functions in glutamate neurotransmission. Is involved in the cell surface targeting of NMDA receptors. Plays a role in associative learning and in long-term memory consolidation. This Drosophila virilis (Fruit fly) protein is Glutamate [NMDA] receptor subunit 1.